The sequence spans 322 residues: PI-PLC X domain-containing protein 3 (322 aa).

The PI-PLC X-box domain occupies 22 to 197; that stretch reads TLHGIPLTNL…EYQVLVFYHN (176 aa). Residues His-37 and His-114 contribute to the active site.

This is PI-PLC X domain-containing protein 3 (plcxd3) from Danio rerio (Zebrafish).